The sequence spans 208 residues: Protein GrpE (208 aa).

Positions 1–27 (MERMNQSRKVPIHDAAEESSAEAHETQ) are enriched in basic and acidic residues. The tract at residues 1–65 (MERMNQSRKV…AEEAQEEEAA (65 aa)) is disordered. The span at 45 to 64 (MAEEAVEQAQDAEEAQEEEA) shows a compositional bias: acidic residues.

The protein belongs to the GrpE family. In terms of assembly, homodimer.

It localises to the cytoplasm. Participates actively in the response to hyperosmotic and heat shock by preventing the aggregation of stress-denatured proteins, in association with DnaK and GrpE. It is the nucleotide exchange factor for DnaK and may function as a thermosensor. Unfolded proteins bind initially to DnaJ; upon interaction with the DnaJ-bound protein, DnaK hydrolyzes its bound ATP, resulting in the formation of a stable complex. GrpE releases ADP from DnaK; ATP binding to DnaK triggers the release of the substrate protein, thus completing the reaction cycle. Several rounds of ATP-dependent interactions between DnaJ, DnaK and GrpE are required for fully efficient folding. In Desulfatibacillum aliphaticivorans, this protein is Protein GrpE.